We begin with the raw amino-acid sequence, 173 residues long: Streptothricin acetyltransferase A (173 aa).

One can recognise an N-acetyltransferase domain in the interval Val-21 to Phe-173.

The protein belongs to the acetyltransferase family. GNAT subfamily. As to quaternary structure, homodimer.

It catalyses the reaction streptothricin D + acetyl-CoA = N(beta)-acetylstreptothricin D + CoA + H(+). The enzyme catalyses streptothricin F + acetyl-CoA = N(beta)-acetylstreptothricin F + CoA + H(+). Involved in resistance to streptothricin, a broad-spectrum antibiotic produced by streptomycetes. Detoxifies streptothricin via acetylation of the beta amino group of the first beta-lysyl moiety of streptothricin. The sequence is that of Streptothricin acetyltransferase A from Bacillus subtilis (strain 168).